A 380-amino-acid chain; its full sequence is Actin-like protein arp10 (380 aa).

Belongs to the actin family. ARP10 subfamily.

The protein localises to the cytoplasm. The protein resides in the cytoskeleton. It is found in the nucleus. The protein is Actin-like protein arp10 (arp10) of Schizosaccharomyces pombe (strain 972 / ATCC 24843) (Fission yeast).